A 339-amino-acid chain; its full sequence is Endo-beta-N-acetylglucosaminidase F1 (339 aa).

The or 51, or 52 signal peptide spans 1–50 (MKKFINQFSASLKNNILVFLAFPFVWTSCARDNPLSSENSNISPNAAARA). In terms of domain architecture, GH18 spans 60-326 (IKLFSFTEVN…KLIAKELYGD (267 aa)). The Proton donor role is filled by glutamate 182. Position 339 (tryptophan 339) is a propeptide, removed in mature form.

The protein belongs to the glycosyl hydrolase 18 family. As to quaternary structure, monomer.

The protein resides in the secreted. It carries out the reaction an N(4)-(oligosaccharide-(1-&gt;3)-[oligosaccharide-(1-&gt;6)]-beta-D-Man-(1-&gt;4)-beta-D-GlcNAc-(1-&gt;4)-alpha-D-GlcNAc)-L-asparaginyl-[protein] + H2O = an oligosaccharide-(1-&gt;3)-[oligosaccharide-(1-&gt;6)]-beta-D-Man-(1-&gt;4)-D-GlcNAc + N(4)-(N-acetyl-beta-D-glucosaminyl)-L-asparaginyl-[protein]. Its function is as follows. Endohydrolysis of the di-N-acetylchitobiosyl unit in high-mannose glycopeptides and glycoproteins. Does not hydrolyze complex bi- or triantennary glycans. The presence of a core-bound fucose impedes endo F1 hydrolysis. The sequence is that of Endo-beta-N-acetylglucosaminidase F1 (endOF1) from Elizabethkingia meningoseptica (Chryseobacterium meningosepticum).